The following is a 132-amino-acid chain: Myelin P2 protein (132 aa).

S2 carries the N-acetylserine modification. Residue R107 participates in (9Z)-octadecenoate binding. R107 provides a ligand contact to hexadecanoate. A disulfide bridge links C118 with C125. 127–129 (RIY) lines the (9Z)-octadecenoate pocket. Residue 127–129 (RIY) participates in hexadecanoate binding.

It belongs to the calycin superfamily. Fatty-acid binding protein (FABP) family. As to quaternary structure, monomer.

It localises to the cytoplasm. Its function is as follows. May play a role in lipid transport protein in Schwann cells. May bind cholesterol. This Sus scrofa (Pig) protein is Myelin P2 protein.